The following is a 4911-amino-acid chain: Histone-lysine N-methyltransferase 2C (4911 aa).

The tract at residues 1–101 is disordered; sequence MSSEEDKSVE…EDAEAEVDNS (101 aa). Pro residues predominate over residues 12–28; the sequence is PQPPPPPPEEPGAPAPS. A phosphoserine mark is found at Ser28 and Ser46. The a.T hook DNA-binding region spans 34 to 46; that stretch reads KRPRGRPRKDGAS. Residues 50–59 are compositionally biased toward basic residues; the sequence is RARKKPRSRG. Acidic residues predominate over residues 64-81; that stretch reads EDEDSMDGLETTETETIV. A Phosphoserine modification is found at Ser89. Positions 92 to 112 form a coiled coil; the sequence is EDAEAEVDNSKQLIPTLQRSV. Position 113 is a phosphoserine (Ser113). The segment at 164-203 is disordered; that stretch reads RNQPSNKKDIDDNSNGTYEKMQNSAPRKQRGQRKERSPQQ. The span at 176–189 shows a compositional bias: polar residues; the sequence is NSNGTYEKMQNSAP. Ser200 carries the phosphoserine modification. The C2HC pre-PHD-type 1; degenerate zinc-finger motif lies at 227-262; the sequence is ELSLVGLPDAIDIQALFDSTGTCWAHHRCVEWSLGV. PHD-type zinc fingers lie at residues 283–331, 341–391, 388–438, and 464–520; these read ERCA…PEHI, DANC…CKVC, CKVC…CRIC, and DNLC…CKHL. The RING-type zinc-finger motif lies at 344 to 389; sequence CAVCDSPGDLLDQFFCTTCGQHYHGMCLDIAVTPLKRAGWQCPECK. The DHHC domain maps to 436–489; it reads RICIECGTRSSSQWHHNCLICDNCYQQQDNLCPFCGKCYHPELQKDMLHCNMCK. A coiled-coil region spans residues 644 to 672; that stretch reads EDKMEVTENIEVVTHQITVQQEQLQLLEE. Residues 721-730 are compositionally biased toward basic and acidic residues; the sequence is QGEKEQKENS. Residues 721–742 are disordered; it reads QGEKEQKENSELSTGLMDSEMT. At Lys758 the chain carries N6-acetyllysine. The segment covering 763-791 has biased composition (low complexity); the sequence is SSETESSFSSSADISKADVSSSPTPSSDL. Disordered stretches follow at residues 763–798, 828–864, and 885–912; these read SSET…DMLH, PAIT…DISE, and GRGS…RSKL. A compositionally biased stretch (basic residues) spans 830–842; it reads ITKRKFSPGRPRS. Over residues 845 to 856 the composition is skewed to polar residues; that stretch reads GAWSTHNTVSPP. Ser854 carries the phosphoserine modification. 3 PHD-type zinc fingers span residues 957 to 1010, 1007 to 1057, and 1084 to 1139; these read QDMC…CTVC, CTVC…CVWC, and LSSC…CRPY. The tract at residues 1215 to 1324 is disordered; it reads AVLQTPPDIQ…LPCRDDGWSE (110 aa). Basic and acidic residues predominate over residues 1224 to 1270; that stretch reads QSEHSRDGEMDDSREGELMDCDGKSESSPEREAVDDETKGVEGTDGV. Position 1301 is a phosphoserine (Ser1301). The stretch at 1338–1366 forms a coiled coil; that stretch reads TESTEKIKKRYRKRKNKLEETFPAYLQEA. A compositionally biased stretch (low complexity) spans 1406-1416; the sequence is PSLDPLLSSSS. Disordered regions lie at residues 1406–1431 and 1458–1485; these read PSLD…DDPL and HSDI…PLSE. Positions 1467-1482 are enriched in polar residues; that stretch reads DPSSLPQPNVNQSSRP. Residue Lys1508 is modified to N6-acetyllysine. Disordered regions lie at residues 1604–1630 and 1709–2448; these read FNPM…DTMS and VQMS…SPVA. 2 stretches are compositionally biased toward polar residues: residues 1610–1620 and 1709–1727; these read DPNNSWTSSAP and VQMS…SIDP. A compositionally biased stretch (basic and acidic residues) spans 1729–1753; it reads SRIDSELFKDPLKQRESEHEQEWKF. Positions 1754 to 1787 form a coiled coil; sequence RQQMRQKSKQQAKIEATQKLEQVKNEQQQQQQQQ. Lys1772 is subject to N6-acetyllysine. The segment covering 1788–1823 has biased composition (polar residues); sequence FGSQHLLVQSGSDTPSSGIQSPLTPQPGNGNMSPAQ. Over residues 1851–1860 the composition is skewed to pro residues; sequence QAPPPPPAPS. The segment covering 1861–1875 has biased composition (low complexity); sequence RIPIQDSLSQAQTSQ. Residues 1927-1945 are compositionally biased toward polar residues; sequence TPLSSVSRPLQMNETTANR. Position 1987 is a phosphoserine (Ser1987). Lys2009 bears the N6-acetyllysine mark. Polar residues-rich tracts occupy residues 2054–2065, 2085–2094, 2115–2131, and 2144–2159; these read QDPYGSVSQASR, FSHNQSNDPY, AFSQ…QDPY, and SYSQ…TDPY. Low complexity predominate over residues 2173–2187; it reads PYSQQPQTPRPSTQT. 3 stretches are compositionally biased toward polar residues: residues 2302–2319, 2335–2353, and 2362–2375; these read SPMT…SQTA, CASS…SGVS, and SGVT…NMAQ. The span at 2377–2389 shows a compositional bias: basic and acidic residues; it reads DTEKLRQRQKLRE. Residues 2390–2399 are compositionally biased toward low complexity; it reads IILQQQQQKK. Asymmetric dimethylarginine occurs at positions 2454 and 2571. 4 disordered regions span residues 2589-2694, 2793-2887, 2925-2954, and 2989-3029; these read RHGN…SDDP, EPKK…RETA, EKSD…VSSL, and VNPG…SGPQ. 2 stretches are compositionally biased toward polar residues: residues 2629 to 2645 and 2661 to 2682; these read PPSQ…SSMV and PLST…TQPS. Basic and acidic residues predominate over residues 2793-2811; that stretch reads EPKKKEQENKTLVLSDKHS. N6-acetyllysine is present on residues Lys2802 and Lys2809. Positions 2814 to 2832 are enriched in polar residues; the sequence is KKSTVTNEVKTEVLSPNSK. Ser2828 carries the post-translational modification Phosphoserine. At Lys2832 the chain carries N6-acetyllysine. Positions 2833–2849 are enriched in basic and acidic residues; the sequence is VESKCETEKNDENKDNV. Residues 2851–2860 show a composition bias toward polar residues; it reads TPCSQASAHS. Positions 2861 to 2884 are enriched in basic and acidic residues; it reads DLNDGEKTSLHPCDPDLFEKRTNR. At Lys2867 the chain carries N6-acetyllysine. Residues 3011-3029 are compositionally biased toward low complexity; that stretch reads TQTGPQTSQSGTSSMSGPQ. 3 coiled-coil regions span residues 3054–3081, 3173–3272, and 3391–3433; these read LLQD…QRSE, NDSQ…QQQQ, and FSES…EMEQ. Residues 3205–3221 show a composition bias toward basic residues; sequence HRKSKKALSAKQRTAKK. Disordered regions lie at residues 3205–3241, 3353–3409, 3527–3583, 3596–3919, and 4024–4053; these read HRKS…TEQQ, PPIA…EQQE, PNFS…HSYP, IIPE…MANG, and VKEE…SRRN. 2 stretches are compositionally biased toward basic and acidic residues: residues 3222–3238 and 3395–3409; these read AGRE…KHVT and FQER…EQQE. Composition is skewed to polar residues over residues 3527–3549, 3564–3583, 3637–3658, and 3684–3701; these read PNFS…QSPV, ANSS…HSYP, ISET…QADQ, and LPNS…TYAN. Residues 3703 to 3725 show a composition bias toward basic and acidic residues; it reads EVDKLSMETPAKTEEIKLEKAET. Position 3714 is an N6-acetyllysine (Lys3714). Ser3758 is subject to Phosphoserine. Residues 3803 to 3812 are compositionally biased toward basic and acidic residues; the sequence is DCTKDNKLVE. Positions 3878 to 3892 are enriched in polar residues; it reads MYSSTDTFTHLKQQN. A compositionally biased stretch (pro residues) spans 3897–3911; that stretch reads PPTPPASLPPTPPPM. Ser4034 bears the Phosphoserine mark. An Asymmetric dimethylarginine modification is found at Arg4139. Ser4267 carries the post-translational modification Phosphoserine. Residues 4399-4439 form a C2HC pre-PHD-type 2 zinc finger; the sequence is YRKCCFCHEEGDGLTDGPARLLNLDLDLWVHLNCALWSTEV. The segment at 4460 to 4507 adopts a PHD-type 8 zinc-finger fold; that stretch reads MKCVFCHKTGATSGCHRFRCTNIYHFTCAIKAQCMFFKDKTMLCPMHK. An FYR N-terminal domain is found at 4545–4605; that stretch reads DHTFRVGSLI…CRYLCSIEEK (61 aa). The 86-residue stretch at 4606–4691 folds into the FYR C-terminal domain; sequence DGRPVFVIRI…EACENYTFRY (86 aa). Positions 4707 to 4712 match the WDR5 interaction motif (WIN) motif; that stretch reads GCARSE. Residues 4771–4887 enclose the SET domain; sequence SNVYLARSRI…KGEELCYDYK (117 aa). S-adenosyl-L-methionine is bound by residues Tyr4825 and 4848-4849; that span reads NH. Positions 4851, 4899, 4901, and 4906 each coordinate Zn(2+). Residues 4895–4911 form the Post-SET domain; sequence HKIPCHCGAVNCRKWMN.

It belongs to the class V-like SAM-binding methyltransferase superfamily. Histone-lysine methyltransferase family. TRX/MLL subfamily. Component of the MLL3 complex (also named ASCOM complex), at least composed of catalytic subunit KMT2C/MLL3, ASH2L, RBBP5, WDR5, NCOA6, DPY30, KDM6A, PAXIP1/PTIP, PAGR1 and alpha- and beta-tubulin. Forms a core complex with the evolutionary conserved subcomplex WRAD composed of WDR5, RBBP5, ASH2L/ASH2 and DPY30 subunits; WRAD differentially stimulates the methyltransferase activity. Interacts (via WIN motif) with WDR5. In terms of tissue distribution, highly expressed in testis and ovary, followed by brain and liver. Also expressed in placenta, peripherical blood, fetal thymus, heart, lung and kidney. Within brain, expression was highest in hippocampus, caudate nucleus, and substantia nigra. Not detected in skeletal muscle and fetal liver.

It is found in the nucleus. The catalysed reaction is L-lysyl(4)-[histone H3] + S-adenosyl-L-methionine = N(6)-methyl-L-lysyl(4)-[histone H3] + S-adenosyl-L-homocysteine + H(+). Histone methyltransferase that catalyzes methyl group transfer from S-adenosyl-L-methionine to the epsilon-amino group of 'Lys-4' of histone H3 (H3K4). Part of chromatin remodeling machinery predominantly forms H3K4me1 methylation marks at active chromatin sites where transcription and DNA repair take place. Likely plays a redundant role with KMT2D in enriching H3K4me1 mark on primed and active enhancer elements. This Homo sapiens (Human) protein is Histone-lysine N-methyltransferase 2C (KMT2C).